A 121-amino-acid chain; its full sequence is Probable intron-encoded DNA endonuclease aI1 (121 aa).

It belongs to the LAGLIDADG endonuclease family.

It localises to the mitochondrion. Functionally, mitochondrial DNA endonuclease involved in intron homing. The sequence is that of Probable intron-encoded DNA endonuclease aI1 (aI1) from Mycosarcoma maydis (Corn smut fungus).